We begin with the raw amino-acid sequence, 253 residues long: Electron transfer flavoprotein subunit beta, mitochondrial (253 aa).

It belongs to the ETF beta-subunit/FixA family. Heterodimer of an alpha and a beta subunit. Requires FAD as cofactor. It depends on AMP as a cofactor.

The protein resides in the mitochondrion matrix. Functionally, the electron transfer flavoprotein serves as a specific electron acceptor for several dehydrogenases, including five acyl-CoA dehydrogenases, glutaryl-CoA and sarcosine dehydrogenase. It transfers the electrons to the main mitochondrial respiratory chain via ETF-ubiquinone oxidoreductase (ETF dehydrogenase). The polypeptide is Electron transfer flavoprotein subunit beta, mitochondrial (ETFB) (Oryza sativa subsp. japonica (Rice)).